Consider the following 337-residue polypeptide: 4-hydroxythreonine-4-phosphate dehydrogenase (337 aa).

The substrate site is built by histidine 139 and threonine 140. Histidine 173, histidine 218, and histidine 273 together coordinate a divalent metal cation. Substrate-binding residues include lysine 281, asparagine 290, and arginine 299.

This sequence belongs to the PdxA family. As to quaternary structure, homodimer. Zn(2+) serves as cofactor. Mg(2+) is required as a cofactor. It depends on Co(2+) as a cofactor.

The protein resides in the cytoplasm. It catalyses the reaction 4-(phosphooxy)-L-threonine + NAD(+) = 3-amino-2-oxopropyl phosphate + CO2 + NADH. It functions in the pathway cofactor biosynthesis; pyridoxine 5'-phosphate biosynthesis; pyridoxine 5'-phosphate from D-erythrose 4-phosphate: step 4/5. Functionally, catalyzes the NAD(P)-dependent oxidation of 4-(phosphooxy)-L-threonine (HTP) into 2-amino-3-oxo-4-(phosphooxy)butyric acid which spontaneously decarboxylates to form 3-amino-2-oxopropyl phosphate (AHAP). The polypeptide is 4-hydroxythreonine-4-phosphate dehydrogenase (Rhodopseudomonas palustris (strain ATCC BAA-98 / CGA009)).